We begin with the raw amino-acid sequence, 345 residues long: S-adenosylmethionine:tRNA ribosyltransferase-isomerase (345 aa).

It belongs to the QueA family. In terms of assembly, monomer.

It localises to the cytoplasm. The enzyme catalyses 7-aminomethyl-7-carbaguanosine(34) in tRNA + S-adenosyl-L-methionine = epoxyqueuosine(34) in tRNA + adenine + L-methionine + 2 H(+). It participates in tRNA modification; tRNA-queuosine biosynthesis. Transfers and isomerizes the ribose moiety from AdoMet to the 7-aminomethyl group of 7-deazaguanine (preQ1-tRNA) to give epoxyqueuosine (oQ-tRNA). The polypeptide is S-adenosylmethionine:tRNA ribosyltransferase-isomerase (Aromatoleum aromaticum (strain DSM 19018 / LMG 30748 / EbN1) (Azoarcus sp. (strain EbN1))).